Consider the following 569-residue polypeptide: Peroxisomal targeting signal receptor (569 aa).

Cys5 participates in a covalent cross-link: Glycyl cysteine thioester (Cys-Gly) (interchain with G-Cter in ubiquitin). Residues 6–28 (SVGANPLAQLNKRVQQDRTLQHG) form an amphipathic helix 1 (AH1) region. Lys17 is covalently cross-linked (Glycyl lysine isopeptide (Lys-Gly) (interchain with G-Cter in ubiquitin)). The interval 53 to 71 (KFQMEQFMAGKASSGGNMF) is amphipathic helix 2 (AH2). The WxxxF/Y motif 1 signature appears at 112–116 (WSQEF). The tract at residues 150–154 (PMNMM) is amphipathic helix 3 (AH3). Positions 181 to 185 (WEQQF) match the WxxxF/Y motif 2 motif. Residues 229–245 (FQQIWNDIHDQTDDLDS) form an amphipathic helix 4 (AH4) region. TPR repeat units follow at residues 281-315 (NTDA…DPGH), 316-349 (VDAW…DPHN), 417-450 (PDVQ…RPDD), 452-484 (CMWN…KPTF), and 486-518 (RARY…HEVE).

This sequence belongs to the peroxisomal targeting signal receptor family. As to quaternary structure, interacts (via WxxxF/Y and LVxEF motifs) with PEX14; promoting translocation through the PEX13-PEX14 docking complex. In terms of processing, monoubiquitinated at Cys-5 by PEX2 during PEX5 passage through the retrotranslocation channel: monoubiquitination acts as a signal for PEX5 extraction and is required for proper export from peroxisomes and recycling. When PEX5 recycling is compromised, polyubiquitinated at Lys-17 by PEX10 during its passage through the retrotranslocation channel, leading to its degradation.

The protein resides in the cytoplasm. It is found in the cytosol. The protein localises to the peroxisome matrix. Functionally, receptor that mediates peroxisomal import of proteins containing a C-terminal PTS1-type tripeptide peroxisomal targeting signal (SKL-type). Binds to cargo proteins containing a PTS1 peroxisomal targeting signal in the cytosol, and translocates them into the peroxisome matrix by passing through the PEX13-PEX14 docking complex along with cargo proteins. PEX5 receptor is then retrotranslocated into the cytosol, leading to release of bound cargo in the peroxisome matrix, and reset for a subsequent peroxisome import cycle. This Eremothecium gossypii (strain ATCC 10895 / CBS 109.51 / FGSC 9923 / NRRL Y-1056) (Yeast) protein is Peroxisomal targeting signal receptor (PEX5).